The chain runs to 123 residues: Small ribosomal subunit protein uS12c (123 aa).

Belongs to the universal ribosomal protein uS12 family. Part of the 30S ribosomal subunit.

Its subcellular location is the plastid. The protein resides in the chloroplast. Its function is as follows. With S4 and S5 plays an important role in translational accuracy. Located at the interface of the 30S and 50S subunits. This Anthoceros angustus (Hornwort) protein is Small ribosomal subunit protein uS12c (rps12).